Here is a 114-residue protein sequence, read N- to C-terminus: SOSS complex subunit C homolog (114 aa).

Residues 1–10 (MAFQQHGNQE) show a composition bias toward polar residues. Positions 1–61 (MAFQQHGNQE…AGNTSASRIH (61 aa)) are disordered.

This sequence belongs to the SOSS-C family.

The sequence is that of SOSS complex subunit C homolog from Nematostella vectensis (Starlet sea anemone).